Here is a 485-residue protein sequence, read N- to C-terminus: Zinc finger protein 639 (485 aa).

Basic residues predominate over residues 1–14 (MNEYPKKRKRKTLH). Residues 1-20 (MNEYPKKRKRKTLHPSRYSD) form a disordered region. S60 is subject to Phosphoserine. K76 is covalently cross-linked (Glycyl lysine isopeptide (Lys-Gly) (interchain with G-Cter in SUMO2)). The residue at position 88 (S88) is a Phosphoserine. Residues K177, K181, and K226 each participate in a glycyl lysine isopeptide (Lys-Gly) (interchain with G-Cter in SUMO2) cross-link. C2H2-type zinc fingers lie at residues 204–227 (YKCELCEFNSKYFSDLKQHMILKH), 233–255 (NVCRVCKESFSTNMLLIEHAKLH), 260–283 (YICKYCDYKTVIFENLSQHIADTH), 289–311 (YWCEQCDVQFSSSSELYLHFQEH), 374–397 (FVCQVCGFRSRLHTNVNRHVAIEH), 403–425 (HVCDDCGKGFSSMLEYCKHLNSH), 431–454 (YLCQYCEYSTGQIEDLKIHLDFKH), and 460–482 (HKCSDCLMRFGNERELISHLPVH). The interaction with CTNNA2 stretch occupies residues 371-455 (KNFFVCQVCG…LKIHLDFKHS (85 aa)).

It belongs to the krueppel C2H2-type zinc-finger protein family. Interacts with CTNNA2.

Its subcellular location is the nucleus. Functionally, binds DNA and may function as a transcriptional repressor. This Homo sapiens (Human) protein is Zinc finger protein 639 (ZNF639).